Consider the following 1244-residue polypeptide: DNA polymerase beta (1244 aa).

Repeat copies occupy residues 1069–1072, 1073–1076, 1077–1080, 1081–1084, 1085–1088, 1089–1092, 1093–1096, 1097–1100, 1101–1104, 1105–1108, 1109–1112, 1113–1116, and 1117–1120. A disordered region spans residues 1069-1118; that stretch reads AGNPAGNPAGNPAGNPAGNPAGNPAGNPAGNPAGNPAGNPAGNPAGNPAG. Positions 1069–1120 are 13 X 4 AA tandem repeats of A-G-N-P; that stretch reads AGNPAGNPAGNPAGNPAGNPAGNPAGNPAGNPAGNPAGNPAGNPAGNPAGNP.

Belongs to the DNA polymerase type-B family.

It catalyses the reaction DNA(n) + a 2'-deoxyribonucleoside 5'-triphosphate = DNA(n+1) + diphosphate. DNA-directed DNA polymerase involved in viral DNA replication. This is DNA polymerase beta (DPOL) from African swine fever virus (isolate Pig/Portugal/Lis 60/1960) (ASFV).